Reading from the N-terminus, the 33-residue chain is Large ribosomal subunit protein eL28 (33 aa).

Belongs to the eukaryotic ribosomal protein eL28 family. In terms of assembly, component of the large ribosomal subunit.

Its subcellular location is the cytoplasm. Its function is as follows. Component of the large ribosomal subunit. The ribosome is a large ribonucleoprotein complex responsible for the synthesis of proteins in the cell. This Xenopus laevis (African clawed frog) protein is Large ribosomal subunit protein eL28 (rpl28).